A 466-amino-acid chain; its full sequence is F-box/WD repeat-containing protein 15 (466 aa).

One can recognise an F-box domain in the interval 1 to 45; the sequence is MAIHLPCLPMMKILSYLDAYSLLQAAQVNKDWNELASSDVLWRKL. 5 WD repeats span residues 101–143, 146–185, 187–228, 339–379, and 381–419; these read GYAC…ITWK, EQPASIKLLTTLPEMHIAVTVDIQSTIKLWDCHNREALAT, NLKS…LIST, LQCH…KTFQ, and CPEMIVKLSVDPLHVIVICNTGSMDVYAWEERSLLLRKC.

In terms of assembly, part of an SCF (SKP1-CUL1-F-box protein) E3 ubiquitin-protein ligase complex. Interacts with KAT7 and SKP1. In terms of tissue distribution, specifically expressed in oocytes from follicles of the medullary region of the ovary.

It is found in the cytoplasm. The protein resides in the cytosol. It localises to the endoplasmic reticulum. The protein localises to the nucleus. It functions in the pathway protein modification; protein ubiquitination. Its function is as follows. Substrate-recognition component of an SCF (SKP1-CUL1-F-box protein)-type E3 ubiquitin ligase complex. Promotes KAT7 ubiquitination and subsequent degradation in collaboration with MAP2K1 kinase, leading to reduced histone H3K14 acetylation and increased cell proliferation. The protein is F-box/WD repeat-containing protein 15 of Mus musculus (Mouse).